The following is a 1450-amino-acid chain: ABC transporter G family member 37 (1450 aa).

In terms of domain architecture, ABC transporter 1 spans Gly-158–Ala-431. Gly-191–Thr-198 lines the ATP pocket. Positions Glu-509–Phe-721 constitute an ABC transmembrane type-2 1 domain. 6 helical membrane-spanning segments follow: residues Phe-527–Phe-547, Gly-559–Ala-579, Ile-614–Phe-634, Leu-646–Gly-666, Val-670–Ile-690, and Ile-756–Leu-776. In terms of domain architecture, ABC transporter 2 spans Ile-852–Asp-1104. Gly-897–Thr-904 is a binding site for ATP. The region spanning Thr-1177 to Phe-1391 is the ABC transmembrane type-2 2 domain. The next 7 membrane-spanning stretches (helical) occupy residues Ala-1198–Leu-1218, Tyr-1236–Val-1256, Leu-1284–Phe-1304, Phe-1311–Met-1331, Ile-1341–Ile-1361, Trp-1372–Gly-1392, and Val-1422–Ile-1442.

The protein belongs to the ABC transporter superfamily. ABCG family. PDR (TC 3.A.1.205) subfamily.

Its subcellular location is the membrane. Functionally, may be a general defense protein. In Oryza sativa subsp. japonica (Rice), this protein is ABC transporter G family member 37.